The primary structure comprises 127 residues: Putative adhesin P1-like protein MPN_203 (127 aa).

The interval 70-90 (TENFTQPQPQPQALKTTTPVF) is disordered.

The protein belongs to the adhesin P1 family.

This chain is Putative adhesin P1-like protein MPN_203, found in Mycoplasma pneumoniae (strain ATCC 29342 / M129 / Subtype 1) (Mycoplasmoides pneumoniae).